A 185-amino-acid chain; its full sequence is Alpha-S1-casein (185 aa).

Residues 1 to 15 (MRLLILTCLVAVALA) form the signal peptide. Phosphoserine is present on residues Ser31, Ser33, Ser41, Ser71, Ser85, Ser86, Ser88, Ser89, Ser90, and Ser91.

It belongs to the alpha-casein family. Heteromultimers of alpha-s1 casein and kappa-casein; disulfide-linked. Not glycosylated. Mammary gland specific. Secreted in milk.

The protein localises to the secreted. Important role in the capacity of milk to transport calcium phosphate. Functionally, casoxin D acts as opioid antagonist and has vasorelaxing activity mediated by bradykinin B1 receptors. The protein is Alpha-S1-casein (CSN1S1) of Homo sapiens (Human).